The primary structure comprises 248 residues: Chromatin target of PRMT1 protein (248 aa).

Residue Ala-2 is modified to N-acetylalanine. Thr-33 carries the post-translational modification Phosphothreonine. A phosphoserine mark is found at Ser-40, Ser-49, and Ser-64. Lys-70 is covalently cross-linked (Glycyl lysine isopeptide (Lys-Gly) (interchain with G-Cter in SUMO2)). The interval 151–204 is disordered; it reads LRRGGVRGRGGPGRGGLGRGAMGRGGIGGRGRGMIGRGRGGFGGRGRGRGRGRG. Residues 153-206 are interaction with PRMT1; the sequence is RGGVRGRGGPGRGGLGRGAMGRGGIGGRGRGMIGRGRGGFGGRGRGRGRGRGAL. Gly residues predominate over residues 157–195; the sequence is RGRGGPGRGGLGRGAMGRGGIGGRGRGMIGRGRGGFGGR. Positions 194 to 203 match the GAR motif; involved in 5hmC binding motif; sequence GRGRGRGRGR. Thr-242 carries the phosphothreonine modification.

Interacts with PRMT1 and PRMT5. Interacts with the 5FMC complex; the interaction is methylation-dependent. Interacts with FYTTD1, SET and PRC1 complex members CBX4, RNF2 and PHC2; the interactions are methylation-independent. Interacts with ZNF148. Component of the transcription/export (TREX) complex at least composed of ALYREF/THOC4, DDX39B, SARNP/CIP29, CHTOP and the THO subcomplex; TREX seems to have dynamic structure involving ATP-dependent remodeling; in the complex interacts (methylated) with ALYREF/THOC4 and with DDX39B in a methylation-independent manner. Interacts (methylated) with NXF1; the interaction is mutually exclusive with the NXF1:THOC5 interaction. Interacts with WDR77 and ERH. In terms of processing, asymmetrically methylated by PRMT1. Symmetrically methylated by PRMT5. In terms of tissue distribution, expressed in an erythroid progenitor cell line derived from peripheral blood. Expressed in glioblastoma cells.

The protein resides in the nucleus. Its subcellular location is the nucleolus. The protein localises to the nucleoplasm. It is found in the nucleus speckle. Its function is as follows. Plays an important role in the ligand-dependent activation of estrogen receptor target genes. May play a role in the silencing of fetal globin genes. Recruits the 5FMC complex to ZNF148, leading to desumoylation of ZNF148 and subsequent transactivation of ZNF148 target genes. Plays an important role in the tumorigenicity of glioblastoma cells. Binds to 5-hydroxymethylcytosine (5hmC) and associates with the methylosome complex containing PRMT1, PRMT5, MEP50 and ERH. The CHTOP-methylosome complex associated with 5hmC is recruited to selective sites on the chromosome, where it methylates H4R3 and activates the transcription of genes involved in glioblastomagenesis. Functionally, required for effective mRNA nuclear export and is a component of the TREX complex which is thought to couple mRNA transcription, processing and nuclear export, and specifically associates with spliced mRNA and not with unspliced pre-mRNA. TREX is recruited to spliced mRNAs by a transcription-independent mechanism, binds to mRNA upstream of the exon-junction complex (EJC) and is recruited in a splicing- and cap-dependent manner to a region near the 5' end of the mRNA where it functions in mRNA export to the cytoplasm via the TAP/NFX1 pathway. The TREX complex is essential for the export of Kaposi's sarcoma-associated herpesvirus (KSHV) intronless mRNAs and infectious virus production. Stimulates DDX39B ATPase and helicase activities. In cooperation with ALYREF/THOC4 enhances NXF1 RNA binding activity. This Homo sapiens (Human) protein is Chromatin target of PRMT1 protein (CHTOP).